A 1249-amino-acid polypeptide reads, in one-letter code: MRRGGWRKRTENDGWEKWGGYMAAKVQKLEEQFRTDAANQKDGTASAIFSGVAIYVNGYTDPSAEELRNLMMLHGGQYHVYYSRSKTTHIIATNLPNAKIKELKGEKVIRPEWIVESIKAGRLLSSAPYQLYTKPSAAQKSLNFNPVCKPEDPGPGPSNRAKQLNNRVNHIIKKIETESEVKANGLSSWNEDGVNDDFSFEDLEHTFPGRKQNGVMHPRDTAVIFNGHTHSSNGALKTQDCLVPVGNSVASRLSLDSTQEEKRAEKSNADFRDCTVQHLQHSTRSADALRSPHRTNSLSPSLHSNTKINGAHHSTVQGPSSTKSTSVLTLSKVAPSVPSKPSDCNFISDFYSRSRLHHISTWKCELTEFVNTLQRQSSGIFPGREKLKKVKTGRSSLVVTDTGTMSVLSSPRHQSCVMHVDMDCFFVSVGIRNRPDLKGKPVAVTSNRGTGTAPLRPGANPQLEWQYYQNRALRGKAADIPDSSVWENQDSTQTNGIDSVLSKAEIASCSYEARQVGIKNGMFFGYAKQLCPNLQAVPYDFHACREVAQAMYETLASYTHSIEAVSCDEALIDVTDILAETKLSPEEFAAALRIEIKDKTKCAASVGIGSNILLARMATKKAKPDGQYHLQPDEVDDFIRGQLVTNLPGVGRSMESKLASLGIKTCGDLQCLTMAKLQKEFGPKTGQMLYRFCRGLDDRPVRTEKERKSVSAEINYGIRFTQPKEAEAFLLSLSEEIQRRLEAAGMKGKRLTLKIMVRKPGAPIETAKFGGHGICDNIARTVTLDQATDSAKIIGKATLNMFHTMKLNISDMRGVGIQVNQLVPANSNLSTCSSRPSAQSSLFSGRPHSVRDLFQLQKAKKPTEEEHKEVFLAAVDLEVSSTSRACGLLSPLSAHLAASVSPDTNSGECSRKWNGLHSPVSGQSRLNLSIEVPSPSQIDQSVLEALPLDLREQIEQVCAAQQGEPRGKKKEPVNGCSSGVLPHPVGTVLLQIPEPQEPCNSDSKISVIALPAFSQVDPDVFAALPAELQKELKAAYDQRQRQGEDTTHQQPTSTSVPKNPLLQLKPPAMKDKRNKRKNLIGSPRKSPLKNKLLSSPAKTLPGAYGSPQKLMDGFLQHEGMASERPLEEVSASTPGAQDLSSLLPGQSSCFRPAAPNLAGAVEFSDVKTLLKEWITTISDPMEEDILQVVRYCTDLIEEKDLEKLDLVIKYMKRLMQQSVESVWNMAFDFILDNVQVVLQQTYGSTLKVT.

The BRCT domain occupies 44 to 131; that stretch reads TASAIFSGVA…RLLSSAPYQL (88 aa). Residues 253 to 323 are disordered; that stretch reads LSLDSTQEEK…STVQGPSSTK (71 aa). Basic and acidic residues predominate over residues 259 to 275; sequence QEEKRAEKSNADFRDCT. Positions 294–319 are enriched in polar residues; it reads RTNSLSPSLHSNTKINGAHHSTVQGP. The interaction with target DNA stretch occupies residues 350–360; it reads FYSRSRLHHIS. Residues Arg-355, 421-425, 508-514, Asn-520, and Asp-568 each bind dCTP; these read DMDCF and SCSYEAR. In terms of domain architecture, UmuC spans 417–651; sequence VMHVDMDCFF…QLVTNLPGVG (235 aa). Residue Asp-421 participates in Mg(2+) binding. The Mg(2+) site is built by Asp-568 and Glu-569. Interaction with target DNA stretches follow at residues 651 to 654 and 707 to 715; these read GRSM and RKSVSAEIN. A compositionally biased stretch (basic and acidic residues) spans 1035–1047; it reads AYDQRQRQGEDTT. The tract at residues 1035–1109 is disordered; that stretch reads AYDQRQRQGE…LPGAYGSPQK (75 aa). A compositionally biased stretch (polar residues) spans 1048–1057; it reads HQQPTSTSVP. The Nuclear localization signal motif lies at 1072–1078; it reads KRNKRKN. Positions 1150 to 1249 are protein interaction domain; mediates interaction with DNA polymerase zeta; it reads FRPAAPNLAG…QTYGSTLKVT (100 aa).

Belongs to the DNA polymerase type-Y family. Interacts with FAAP20. Monomer. Interacts with the DNA polymerase zeta which is composed of REV3L and MAD2L2; the interaction with MAD2L2 is direct and requires that REV3L is in its closed conformation. Interacts with POLH, POLI and POLK. As to expression, ubiquitous.

It is found in the nucleus. Its function is as follows. Deoxycytidyl transferase involved in DNA repair. Transfers a dCMP residue from dCTP to the 3'-end of a DNA primer in a template-dependent reaction. May assist in the first step in the bypass of abasic lesions by the insertion of a nucleotide opposite the lesion. Required for normal induction of mutations by physical and chemical agents. The polypeptide is DNA repair protein REV1 (Rev1) (Mus musculus (Mouse)).